We begin with the raw amino-acid sequence, 178 residues long: Large ribosomal subunit protein uL6 (178 aa).

This sequence belongs to the universal ribosomal protein uL6 family. Part of the 50S ribosomal subunit.

Functionally, this protein binds to the 23S rRNA, and is important in its secondary structure. It is located near the subunit interface in the base of the L7/L12 stalk, and near the tRNA binding site of the peptidyltransferase center. The polypeptide is Large ribosomal subunit protein uL6 (Oenococcus oeni (strain ATCC BAA-331 / PSU-1)).